Reading from the N-terminus, the 232-residue chain is Ribosomal RNA small subunit methyltransferase G (232 aa).

The tract at residues 1–24 is disordered; sequence MVDTALHPIPGRRTPPHPRSTLPL. S-adenosyl-L-methionine-binding positions include Gly-91, Leu-96, 142-143, and Arg-160; that span reads AE.

This sequence belongs to the methyltransferase superfamily. RNA methyltransferase RsmG family.

The protein resides in the cytoplasm. In terms of biological role, specifically methylates the N7 position of guanine in position 518 of 16S rRNA. This is Ribosomal RNA small subunit methyltransferase G from Corynebacterium efficiens (strain DSM 44549 / YS-314 / AJ 12310 / JCM 11189 / NBRC 100395).